Consider the following 519-residue polypeptide: Circadian clock oscillator protein KaiC (519 aa).

The KaiC 1 domain maps to Met-1–Phe-247. Positions 49, 50, 51, 52, 53, and 54 each coordinate ATP. A Mg(2+)-binding site is contributed by Thr-53. The active-site Proton acceptor in CI (KaiC 1) is the Glu-77. Ser-89 is an ATP binding site. A B-loop, required to bind KaiB and SasA region spans residues Gln-115–Asp-122. ATP is bound by residues Lys-224, Leu-225, Arg-226, Thr-228, His-230, Thr-240, and Asp-241. Residues Pro-248–Asn-260 are linker. The region spanning Val-261 to Ser-519 is the KaiC 2 domain. Positions 290, 291, 292, 293, 294, 295, and 296 each coordinate ATP. Residue Thr-295 coordinates Mg(2+). Residue Glu-318 coordinates Mg(2+). Glu-318 acts as the Proton acceptor in CII (KaiC 2) in catalysis. Trp-331 provides a ligand contact to ATP. Residue Ser-431 is modified to Phosphoserine; by autocatalysis. Phosphothreonine; by autocatalysis is present on Thr-432. Arg-451, Lys-457, Met-458, Arg-459, Ser-461, His-463, and Lys-465 together coordinate ATP. The tract at residues Arg-488–Ile-497 is A-loop, interacts with KaiA.

Belongs to the KaiC family. Homohexamer resembling 2 stacked donuts with a central pore nearly blocked on one side; hexamerization is dependent on ATP-binding. Binds 12 ATP; 6 between each subunit in both layers. KaiB only binds to phospho-Ser-431 KaiC (not doubly phosphorylated KaiC). Complex formation between KaiB and KaiC is regulated by the phosphorylation state of KaiC and by an ATP hydrolysis-driven conformation change in the CI ring of KaiC; complex formation is slow. Slow complex formation is crucial for the timing of the circadian period. KaiB switches to a thioredoxin-like form called KaiB(fs) when bound to KaiC. The KaiABC complex composition changes during the circadian cycle to control KaiC phosphorylation. Complexes KaiC(6), KaiA(2-4):KaiC(6), KaiB(6):KaiC(6) and KaiC(6):KaiB(6):KaiA(12) are among the most important forms, many form cooperatively. Interacts directly with KaiB and SasA. The CI domain binds to KaiB and SasA; as they have a similar fold they compete for the same site on CI. CikA interacts with this protein in the clock complex. Binds to the C-terminus of KaiA via a coiled-coil structure. Forms KaiC(6):KaiB(1) and KaiC(6):KaiB(6) complexes. Mg(2+) serves as cofactor. Has a 4 step phosphorylation cycle; the autokinase acts first on Thr-432, then Ser-431. When Ser-431 is modified KaiC switches to an autophosphatase mode, acting first on phospho-Thr-432 then phospho-Ser-431. Phosphorylated and dephosphorylated on serine/threonine residues by autocatalysis. Unphosphorylated, mono- and di-phosphorylated forms exist. The phosphorylated form correlates with clock speed. The presence of KaiA increases phosphorylation and stabilizes these forms. Post-translationally, phosphorylated on serine and threonine residues by autocatalysis. Has a 4 step phosphorylation cycle; the autokinase acts first on Thr-432, then Ser-431. When Ser-431 is modified KaiC switches to an autophosphatase mode, acting first on phospho-Thr-432 then phospho-Ser-431.

It catalyses the reaction L-seryl-[protein] + ATP = O-phospho-L-seryl-[protein] + ADP + H(+). It carries out the reaction L-threonyl-[protein] + ATP = O-phospho-L-threonyl-[protein] + ADP + H(+). The enzyme catalyses ATP + H2O = ADP + phosphate + H(+). Interaction with KaiA stimulates autophosphorylation, KaiC interaction with KaiB sequesters KaiA, preventing it stimulating the KaiC kinase, leading to autodephosphorylation. A KaiA dimer is sufficient to enhance KaiC phosphorylation. Interaction of KaiA with the A-loop stimulates autokinase activity. Its function is as follows. The KaiABC oscillator complex constitutes the main circadian regulator in cyanobacteria. Complex composition changes during the circadian cycle to control KaiC phosphorylation; KaiA stimulates KaiC autophosphorylation, while KaiB sequesters KaiA, leading to KaiC autodephosphorylation. The Kai complex controls chromosome condensation, leading to a transcription accessible chromosome during the first half of the circadian cycle and a compact, less transcription-accessible chromosome during the latter half. Clock output pathways impact the RpaA transcriptional regulator. Circadian oscillations can be generated in vitro by incubating KaiA, KaiB and KaiC with 1 mM ATP. The cycle is self-sustainable for at least 3 cycles and resistant to temperature changes. Mutations in KaiC alone prolong or reduce the circadian rhythm. A very robust clock is reconstituted with KaiA, KaiB, KaiC, SasA, CikA and RpaA; output is measured by transcription from an appropriate reporter. The level of KaiC phosphorylation and KaiC ATPase activity represent the key features of the biochemical oscillator. KaiA homodimer binding to the KaiC CII domain stimulates KaiC's ATPase activity and forms KaiA(2-4):KaiC(6) complexes, which stimulate KaiC autophosphorylation first on Thr-432 then Ser-431. Phospho-Ser-431-KaiC accumulation triggers binding of KaiB to CI to form the KaiB(6):KaiC(6) complex, leading to changes in the output regulators CikA and SasA. KaiB(6):KaiC(6) formation exposes a site for KaiA binding that sequesters KaiA from the CII domain, making the KaiC(6):KaiB(6):KaiA(12) complex that results in KaiC autodephosphorylation. Complete dephosphorylation of KaiC leads to dissociation of KaiA(2):KaiB(1), completing 1 cycle of the Kai oscillator. Functionally, has a weak, temperature-independent ATPase activity (about 15 molecules of ATP per day); the addition of KaiA and KaiB increases activity slightly and makes the activity oscillate with a circadian period in vitro for over 60 hours. ATPase activity defines the circadian period. The phosphorylation state of KaiC modulates its ATPase activity and effects KaiB binding. In terms of biological role, there are several clock output pathways; SasA/RpaA, CikA/RpaA and LabA. KaiC enhances the autophosphorylation activity of SasA, which then transfers its phosphate group to RpaA to activate it. Phosphotransfer is maximal when KaiC phosphorylation is active during the circadian cycle. KaiB and KaiC together enhance the phosphatase activity of CikA on phospho-RpaA. Its function is as follows. KaiC is important for metabolic partitioning during the dark to light shift, modulating the balance between the Calvin cycle and oxidative pentose phosphate pathway under natural growth conditions. This is Circadian clock oscillator protein KaiC from Synechococcus elongatus (strain ATCC 33912 / PCC 7942 / FACHB-805) (Anacystis nidulans R2).